The primary structure comprises 445 residues: Phospho-alpha-glucosidase PagL (445 aa).

4–71 is an NAD(+) binding site; it reads YSICIVGGGS…ELEEVIWTTD (68 aa). Substrate-binding residues include Arg94 and Asn148. Cys171 serves as a coordination point for Mn(2+). Asp172 functions as the Proton donor in the catalytic mechanism. His201 is a Mn(2+) binding site. The active-site Proton acceptor is Tyr264. Position 284 (Arg284) interacts with substrate.

It belongs to the glycosyl hydrolase 4 family. As to quaternary structure, homotetramer. Requires NAD(+) as cofactor. The cofactor is Mn(2+).

Functionally, phospho-alpha-glucosidase that catalyzes the hydrolysis of p-nitrophenyl-alpha-D-glucopyranoside 6-phosphate, but is not able to cleave 'natural' phospho-alpha-glucosides produced via the phosphoenolpyruvate-dependent sugar phosphotransferase system (PEP-PTS). This is Phospho-alpha-glucosidase PagL (pagL) from Clostridium acetobutylicum (strain ATCC 824 / DSM 792 / JCM 1419 / IAM 19013 / LMG 5710 / NBRC 13948 / NRRL B-527 / VKM B-1787 / 2291 / W).